The sequence spans 86 residues: Translation initiation factor IF-1 (86 aa).

The 72-residue stretch at 1–72 (MPKDDVIKME…TKGRIVYRKK (72 aa)) folds into the S1-like domain.

It belongs to the IF-1 family. In terms of assembly, component of the 30S ribosomal translation pre-initiation complex which assembles on the 30S ribosome in the order IF-2 and IF-3, IF-1 and N-formylmethionyl-tRNA(fMet); mRNA recruitment can occur at any time during PIC assembly.

Its subcellular location is the cytoplasm. Its function is as follows. One of the essential components for the initiation of protein synthesis. Stabilizes the binding of IF-2 and IF-3 on the 30S subunit to which N-formylmethionyl-tRNA(fMet) subsequently binds. Helps modulate mRNA selection, yielding the 30S pre-initiation complex (PIC). Upon addition of the 50S ribosomal subunit IF-1, IF-2 and IF-3 are released leaving the mature 70S translation initiation complex. This chain is Translation initiation factor IF-1, found in Pseudothermotoga lettingae (strain ATCC BAA-301 / DSM 14385 / NBRC 107922 / TMO) (Thermotoga lettingae).